The primary structure comprises 128 residues: Glycine cleavage system H protein (128 aa).

The 83-residue stretch at V24–K106 folds into the Lipoyl-binding domain. N6-lipoyllysine is present on K65.

This sequence belongs to the GcvH family. In terms of assembly, the glycine cleavage system is composed of four proteins: P, T, L and H. (R)-lipoate is required as a cofactor.

Functionally, the glycine cleavage system catalyzes the degradation of glycine. The H protein shuttles the methylamine group of glycine from the P protein to the T protein. The chain is Glycine cleavage system H protein from Yersinia enterocolitica serotype O:8 / biotype 1B (strain NCTC 13174 / 8081).